The sequence spans 548 residues: MVYTSTYRHTIVVDLLEYLGIVSNLETLQSAREDETRKPENTDKKECKPDYDIECGPNRSCSESSTDSDSSGSQIEKNDPFRVDWNGPSDPENPQNWPLLKKSLVVFQIMLLTCVTYMGSSIYTPGQEYIQEEFHVGHVVATLNLSLYVLGYGLGPIIFSPLSETARYGRLNLYMVTLFFFMIFQVGCATVHNIGGLIVMRFISGILCSPSLATGGGTVADIISPEMVPLVLGMWSAGAVAAPVLAPLLGAAMVDAKNWRFIFWLLMWLSAATFILLAFFFPETQHHNILYRRALKLRKETGDDRYYTEQDKLDREVDARTFLINTLYRPLKMIIKEPAILAFDLYIAVAYGCFYLFFEAFPIVFVGIYHFSLVEVGLAYMGFCVGCVLAYGLFGILNMRIIVPRFRNGTFTPEAFLIVAMCVCWCLPLSLFLFGWTARVHWILPVISEVFFVLAVFNIFQATFAYLATCYPKYVASVFAGNGFCRASFACAFPLFGRAMYDNLATKNYPVAWGSSLVGFLTLGLAIIPFILYKYGPSLRTRSSYTEE.

Residues 30 to 94 form a disordered region; it reads SAREDETRKP…WNGPSDPENP (65 aa). The span at 31 to 51 shows a compositional bias: basic and acidic residues; that stretch reads AREDETRKPENTDKKECKPDY. The span at 60–73 shows a compositional bias: low complexity; that stretch reads SCSESSTDSDSSGS. The next 12 helical transmembrane spans lie at 104–124, 139–159, 179–199, 203–223, 230–250, 261–281, 347–367, 376–396, 416–436, 440–460, 476–496, and 511–531; these read LVVF…SIYT, VVAT…PIIF, FFFM…GLIV, ISGI…ADII, LVLG…PLLG, FIFW…AFFF, IAVA…VFVG, VGLA…LFGI, FLIV…LFGW, VHWI…FNIF, ASVF…FPLF, and VAWG…IPFI.

It belongs to the major facilitator superfamily.

It localises to the membrane. Probable efflux transporter. Confers resistance to the azole derivative fluconazole (FCZ). The sequence is that of Fluconazole resistance protein 1 (FLR1) from Saccharomyces cerevisiae (strain ATCC 204508 / S288c) (Baker's yeast).